The chain runs to 289 residues: Elongation factor Ts (289 aa).

The involved in Mg(2+) ion dislocation from EF-Tu stretch occupies residues 82 to 85; it reads TDFV.

This sequence belongs to the EF-Ts family.

It is found in the cytoplasm. In terms of biological role, associates with the EF-Tu.GDP complex and induces the exchange of GDP to GTP. It remains bound to the aminoacyl-tRNA.EF-Tu.GTP complex up to the GTP hydrolysis stage on the ribosome. This chain is Elongation factor Ts, found in Chloroherpeton thalassium (strain ATCC 35110 / GB-78).